Reading from the N-terminus, the 285-residue chain is Shikimate dehydrogenase (NADP(+)) (285 aa).

Shikimate-binding positions include 20–22 (SIS) and serine 67. The active-site Proton acceptor is the lysine 71. NADP(+) is bound at residue glutamate 83. Shikimate contacts are provided by asparagine 92 and aspartate 107. NADP(+) contacts are provided by residues 129–133 (GAGGA) and methionine 227. Tyrosine 229 lines the shikimate pocket. Glycine 250 serves as a coordination point for NADP(+).

The protein belongs to the shikimate dehydrogenase family. As to quaternary structure, homodimer.

The enzyme catalyses shikimate + NADP(+) = 3-dehydroshikimate + NADPH + H(+). It participates in metabolic intermediate biosynthesis; chorismate biosynthesis; chorismate from D-erythrose 4-phosphate and phosphoenolpyruvate: step 4/7. Its function is as follows. Involved in the biosynthesis of the chorismate, which leads to the biosynthesis of aromatic amino acids. Catalyzes the reversible NADPH linked reduction of 3-dehydroshikimate (DHSA) to yield shikimate (SA). The protein is Shikimate dehydrogenase (NADP(+)) of Streptococcus gordonii (strain Challis / ATCC 35105 / BCRC 15272 / CH1 / DL1 / V288).